Consider the following 309-residue polypeptide: Probable manganese-dependent inorganic pyrophosphatase (309 aa).

Mn(2+) is bound by residues H9, D13, D15, D75, H97, and D149.

The protein belongs to the PPase class C family. Mn(2+) serves as cofactor.

Its subcellular location is the cytoplasm. The catalysed reaction is diphosphate + H2O = 2 phosphate + H(+). In Exiguobacterium sp. (strain ATCC BAA-1283 / AT1b), this protein is Probable manganese-dependent inorganic pyrophosphatase.